We begin with the raw amino-acid sequence, 1135 residues long: Potassium channel subfamily T member 2 (1135 aa).

The Cytoplasmic portion of the chain corresponds to 1–63; the sequence is MVDLESEVPP…KNQRSSLRIR (63 aa). The helical transmembrane segment at 64–84 threads the bilayer; the sequence is LFNFSLKLLSCLLYIIRVLLE. Topologically, residues 85 to 101 are extracellular; the sequence is KPSQGSEWSHIFWVNRS. Residues 102–122 traverse the membrane as a helical segment; the sequence is LPLWGLQVSVALISLFETILL. At 123–137 the chain is on the cytoplasmic side; sequence GYLSYKGNIWEQILR. The chain crosses the membrane as a helical span at residues 138-158; sequence IPFILEIINAVPFIISIFWPT. Residues 159–164 are Extracellular-facing; sequence LRNLFV. The helical transmembrane segment at 165-185 threads the bilayer; the sequence is PVFLNCWLAKHALENMINDLH. Residues 186–198 lie on the Cytoplasmic side of the membrane; the sequence is RAIQRTQSAMFNQ. A helical membrane pass occupies residues 199–219; the sequence is VLILISTLLCLIFTCICGIQH. Over 220-228 the chain is Extracellular; sequence LERIGKKLN. Residues 229–249 constitute an intramembrane region (pore-forming); the sequence is LFDSLYFCIVTFSTVGFGDVT. Residues 250 to 256 are Extracellular-facing; the sequence is PETWSSK. Residues 257 to 277 form a helical membrane-spanning segment; sequence LFVVAMICVALVVLPIQFEQL. At 278–1135 the chain is on the cytoplasmic side; sequence AYLWMERQKS…VQDSREETQL (858 aa). 2 consecutive RCK N-terminal domains span residues 299–435 and 718–858; these read EKHV…DHVV and NKLI…CYSL. Disordered stretches follow at residues 982 to 1036 and 1111 to 1135; these read DTKD…AEKI and PNSEPSRKNSICNAAVQDSREETQL. The span at 1010-1030 shows a compositional bias: basic residues; the sequence is LRRKSMQWARRLSRKGPKHSG. Over residues 1111–1122 the composition is skewed to polar residues; the sequence is PNSEPSRKNSIC.

Belongs to the potassium channel family. Calcium-activated (TC 1.A.1.3) subfamily. KCa4.2/KCNT2 sub-subfamily. In terms of assembly, homotetramer. Forms heteromeric channels with KCNT1. These heterodimer channels differ from the homomers in their unitary conductance, kinetic behavior, subcellular localization, and response to activation of protein kinase C. In terms of processing, phosphorylated by protein kinase C. Phosphorylation of the C-terminal domain inhibits channel activity. In terms of tissue distribution, within the dorsal root ganglia (DRGs), exclusively expressed in small-sized and medium-sized calcitonin gene-related peptide (CGRP)-containing DRG neurons.

Its subcellular location is the cell membrane. The enzyme catalyses K(+)(in) = K(+)(out). Are normally in a closed state unless activated by an increase in intracellular Na(+) and Cl(-). Inhibited upon stimulation of G-protein coupled receptors, such as CHRM1 and GRM1. There is conflicting data about the effect of ATP on KNCT2 channels activity. Intracellular ATP was initially report to inhibit the channel activity. However, others studies conclude that KNCT2 channels are not inhibited by intracellular ATP. In terms of biological role, sodium-activated and chloride-activated potassium channel. Produces rapidly activating outward rectifier K(+) currents. Contributes to regulate neuronal excitability. The chain is Potassium channel subfamily T member 2 (Kcnt2) from Mus musculus (Mouse).